A 428-amino-acid polypeptide reads, in one-letter code: 3-phosphoshikimate 1-carboxyvinyltransferase (428 aa).

Positions 20, 21, and 25 each coordinate 3-phosphoshikimate. Lysine 20 contributes to the phosphoenolpyruvate binding site. Residues glycine 92 and arginine 120 each coordinate phosphoenolpyruvate. 3-phosphoshikimate contacts are provided by serine 166, glutamine 168, aspartate 314, and lysine 341. Glutamine 168 provides a ligand contact to phosphoenolpyruvate. Aspartate 314 acts as the Proton acceptor in catalysis. Positions 345 and 387 each coordinate phosphoenolpyruvate.

This sequence belongs to the EPSP synthase family. As to quaternary structure, monomer.

It is found in the cytoplasm. The catalysed reaction is 3-phosphoshikimate + phosphoenolpyruvate = 5-O-(1-carboxyvinyl)-3-phosphoshikimate + phosphate. Its pathway is metabolic intermediate biosynthesis; chorismate biosynthesis; chorismate from D-erythrose 4-phosphate and phosphoenolpyruvate: step 6/7. Functionally, catalyzes the transfer of the enolpyruvyl moiety of phosphoenolpyruvate (PEP) to the 5-hydroxyl of shikimate-3-phosphate (S3P) to produce enolpyruvyl shikimate-3-phosphate and inorganic phosphate. In Listeria welshimeri serovar 6b (strain ATCC 35897 / DSM 20650 / CCUG 15529 / CIP 8149 / NCTC 11857 / SLCC 5334 / V8), this protein is 3-phosphoshikimate 1-carboxyvinyltransferase.